A 388-amino-acid polypeptide reads, in one-letter code: Protein-glutamate methylesterase/protein-glutamine glutaminase (388 aa).

The 119-residue stretch at 20 to 138 folds into the Response regulatory domain; that stretch reads RVMVVDDSVV…ESAGAEVFRH (119 aa). 4-aspartylphosphate is present on Asp71. A CheB-type methylesterase domain is found at 193 to 386; that stretch reads PTAPRVLLIG…PKLVRLFSGD (194 aa). Catalysis depends on residues Ser204, His232, and Asp328.

This sequence belongs to the CheB family. Phosphorylated by CheA. Phosphorylation of the N-terminal regulatory domain activates the methylesterase activity.

The protein resides in the cytoplasm. The catalysed reaction is [protein]-L-glutamate 5-O-methyl ester + H2O = L-glutamyl-[protein] + methanol + H(+). It carries out the reaction L-glutaminyl-[protein] + H2O = L-glutamyl-[protein] + NH4(+). Functionally, involved in chemotaxis. Part of a chemotaxis signal transduction system that modulates chemotaxis in response to various stimuli. Catalyzes the demethylation of specific methylglutamate residues introduced into the chemoreceptors (methyl-accepting chemotaxis proteins or MCP) by CheR. Also mediates the irreversible deamidation of specific glutamine residues to glutamic acid. This chain is Protein-glutamate methylesterase/protein-glutamine glutaminase, found in Rhodopseudomonas palustris (strain HaA2).